The sequence spans 184 residues: Protein GrpE (184 aa).

Positions 1–17 are enriched in basic and acidic residues; sequence MQHEDKTPEQQENKTPE. Residues 1–39 form a disordered region; that stretch reads MQHEDKTPEQQENKTPETELQQENAPATPQEAGAAGSID. Positions 18 to 27 are enriched in polar residues; that stretch reads TELQQENAPA.

This sequence belongs to the GrpE family. As to quaternary structure, homodimer.

Its subcellular location is the cytoplasm. Participates actively in the response to hyperosmotic and heat shock by preventing the aggregation of stress-denatured proteins, in association with DnaK and GrpE. It is the nucleotide exchange factor for DnaK and may function as a thermosensor. Unfolded proteins bind initially to DnaJ; upon interaction with the DnaJ-bound protein, DnaK hydrolyzes its bound ATP, resulting in the formation of a stable complex. GrpE releases ADP from DnaK; ATP binding to DnaK triggers the release of the substrate protein, thus completing the reaction cycle. Several rounds of ATP-dependent interactions between DnaJ, DnaK and GrpE are required for fully efficient folding. The polypeptide is Protein GrpE (Methylobacillus flagellatus (strain ATCC 51484 / DSM 6875 / VKM B-1610 / KT)).